The sequence spans 292 residues: 4-diphosphocytidyl-2-C-methyl-D-erythritol kinase (292 aa).

The active site involves Lys-11. 95–105 serves as a coordination point for ATP; that stretch reads PVSAGLAGGSS. The active site involves Asp-137.

This sequence belongs to the GHMP kinase family. IspE subfamily.

The catalysed reaction is 4-CDP-2-C-methyl-D-erythritol + ATP = 4-CDP-2-C-methyl-D-erythritol 2-phosphate + ADP + H(+). It participates in isoprenoid biosynthesis; isopentenyl diphosphate biosynthesis via DXP pathway; isopentenyl diphosphate from 1-deoxy-D-xylulose 5-phosphate: step 3/6. Catalyzes the phosphorylation of the position 2 hydroxy group of 4-diphosphocytidyl-2C-methyl-D-erythritol. The chain is 4-diphosphocytidyl-2-C-methyl-D-erythritol kinase from Alkaliphilus oremlandii (strain OhILAs) (Clostridium oremlandii (strain OhILAs)).